The following is a 651-amino-acid chain: F-box only protein 43 (651 aa).

Disordered regions lie at residues 14–42 (MTAG…LKGF) and 140–171 (LRRI…TSTL). The segment covering 27-36 (TSVSQDSGYS) has biased composition (polar residues). Phosphoserine; by PLK1 is present on Ser33. Thr195 carries the post-translational modification Phosphothreonine; by CaMK2. The F-box domain maps to 424–499 (SGCFELPEDS…QDKSAHQRRK (76 aa)). Residues 579–627 (ALKPCPRCQYPAKYQALKKRGTCSRKDCGFDFCSLCLCTFHGSKECGTG) form a ZBR-type zinc finger. 8 residues coordinate Zn(2+): Cys583, Cys586, Cys601, Cys606, Cys611, Cys614, His619, and Cys624.

In terms of assembly, part of a SCF (SKP1-cullin-F-box) protein ligase complex. Interaction with SKP1 does not occur. In terms of processing, phosphorylated on Thr-195 by CaMK2 in response to calcium during egg activation, which promotes subsequent phosphorylation by PLK1, ubiquitination and protesomal degradation. Ubiquitinated by FBXW1 during egg activation, which promotes proteasomal degradation.

It functions in the pathway protein modification; protein ubiquitination. Required to prevent anaphase onset in cytostatic factor-arrested oocytes. Inhibits the anaphase-promoting complex/cyclosome (APC/C) ubiquitin ligase and prevents cyclin degradation. Probably recognizes and binds to some phosphorylated proteins and promotes their ubiquitination and degradation. The protein is F-box only protein 43 (fbxo43) of Xenopus laevis (African clawed frog).